We begin with the raw amino-acid sequence, 409 residues long: uncharacterized protein (409 aa).

Over residues 36 to 50 (HLKAKARAQESDSDR) the composition is skewed to basic and acidic residues. Disordered regions lie at residues 36–67 (HLKA…TFSS), 239–298 (IENT…SSTI), and 338–373 (RSQI…TGPR). Over residues 51–67 (PCSSIESSSEPASTFSS) the composition is skewed to low complexity. Over residues 245–265 (VREESNQEHPPGKQEKTEKHP) the composition is skewed to basic and acidic residues. The segment covering 268–281 (LQGSHQAEPETSSK) has biased composition (polar residues). Basic and acidic residues-rich tracts occupy residues 282 to 294 (NSEE…KMDD) and 338 to 350 (RSQI…EGRR).

This is an uncharacterized protein from Homo sapiens (Human).